Reading from the N-terminus, the 489-residue chain is Arginine biosynthesis bifunctional protein ArgJ 2, mitochondrial (489 aa).

Residues 1–11 constitute a mitochondrion transit peptide; sequence MLLISRIGARH. The substrate site is built by Thr-205, Lys-234, Thr-245, Glu-341, and Asn-484. The Nucleophile role is filled by Thr-245.

It belongs to the ArgJ family. Heterodimer of an alpha and a beta chain. The alpha and beta chains are autoproteolytically processed from a single precursor protein within the mitochondrion.

It localises to the mitochondrion matrix. The enzyme catalyses N(2)-acetyl-L-ornithine + L-glutamate = N-acetyl-L-glutamate + L-ornithine. The catalysed reaction is L-glutamate + acetyl-CoA = N-acetyl-L-glutamate + CoA + H(+). It participates in amino-acid biosynthesis; L-arginine biosynthesis; L-ornithine and N-acetyl-L-glutamate from L-glutamate and N(2)-acetyl-L-ornithine (cyclic): step 1/1. It functions in the pathway amino-acid biosynthesis; L-arginine biosynthesis; N(2)-acetyl-L-ornithine from L-glutamate: step 1/4. Functionally, catalyzes two activities which are involved in the cyclic version of arginine biosynthesis: the synthesis of acetylglutamate from glutamate and acetyl-CoA, and of ornithine by transacetylation between acetylornithine and glutamate. The chain is Arginine biosynthesis bifunctional protein ArgJ 2, mitochondrial from Sclerotinia sclerotiorum (strain ATCC 18683 / 1980 / Ss-1) (White mold).